A 592-amino-acid chain; its full sequence is Aspartate--tRNA ligase (592 aa).

Glu173 serves as a coordination point for L-aspartate. Residues 197 to 200 (QLFK) form an aspartate region. Arg219 is a binding site for L-aspartate. ATP-binding positions include 219–221 (RDE) and Gln228. His448 contacts L-aspartate. Glu482 is an ATP binding site. Arg489 is an L-aspartate binding site. 534–537 (GLDR) contributes to the ATP binding site.

The protein belongs to the class-II aminoacyl-tRNA synthetase family. Type 1 subfamily. Homodimer.

The protein localises to the cytoplasm. The enzyme catalyses tRNA(Asp) + L-aspartate + ATP = L-aspartyl-tRNA(Asp) + AMP + diphosphate. Catalyzes the attachment of L-aspartate to tRNA(Asp) in a two-step reaction: L-aspartate is first activated by ATP to form Asp-AMP and then transferred to the acceptor end of tRNA(Asp). This is Aspartate--tRNA ligase from Shewanella baltica (strain OS223).